Consider the following 224-residue polypeptide: Menaquinol:cytochrome c reductase cytochrome b subunit (224 aa).

The chain crosses the membrane as a helical span at residues 37–57 (FSAFVYCFGGLTFFVTVIQVL). Heme b is bound at residue tyrosine 42. Cysteine 43 contributes to the heme c binding site. 4 residues coordinate heme b: arginine 91, histidine 94, histidine 108, and arginine 111. Helical transmembrane passes span 96 to 116 (WGAS…FFQG), 126 to 146 (WIVG…GYLL), and 195 to 215 (IHVF…FIMI). Heme b-binding residues include histidine 196 and histidine 211. Heme c is bound by residues arginine 216 and isoleucine 220. Residue serine 221 coordinates heme b.

The protein belongs to the cytochrome b family. The main subunits of the menaquinol:cytochrome c complex are a Rieske-type iron-sulfur protein (QcrA), a cytochrome b (QcrB) and a cytochrome c (QcrC). The cofactor is heme b. It depends on heme c as a cofactor.

The protein localises to the cell membrane. In terms of biological role, component of the menaquinol:cytochrome c reductase complex. This is Menaquinol:cytochrome c reductase cytochrome b subunit from Bacillus subtilis (strain 168).